We begin with the raw amino-acid sequence, 396 residues long: Putative N(4)-(beta-N-acetylglucosaminyl)-L-asparaginase GG24090 (396 aa).

The N-terminal stretch at 1–23 is a signal peptide; sequence MKRHLGTCLWVLCLASTAFSSLA. 2 disulfide bridges follow: C100-C105 and C199-C215. T246 serves as the catalytic Nucleophile. Substrate is bound by residues 274–277 and 297–300; these read RVGD and TGDG. A disulfide bond links C357 and C384.

It belongs to the Ntn-hydrolase family. As to quaternary structure, heterotetramer of two alpha and two beta chains arranged as a dimer of alpha/beta heterodimers. Cleaved into an alpha and beta chain by autocatalysis; this activates the enzyme. The N-terminal residue of the beta subunit is responsible for the nucleophile hydrolase activity.

It carries out the reaction N(4)-(beta-N-acetyl-D-glucosaminyl)-L-asparagine + H2O = N-acetyl-beta-D-glucosaminylamine + L-aspartate + H(+). In terms of biological role, cleaves the GlcNAc-Asn bond which joins oligosaccharides to the peptide of asparagine-linked glycoproteins. In Drosophila erecta (Fruit fly), this protein is Putative N(4)-(beta-N-acetylglucosaminyl)-L-asparaginase GG24090.